The primary structure comprises 78 residues: Large ribosomal subunit protein bL28 (78 aa).

The segment at 1–31 is disordered; sequence MAAHCQVTGAEPGFGHSISHSHRRNKRRFDP.

It belongs to the bacterial ribosomal protein bL28 family.

In Arthrobacter sp. (strain FB24), this protein is Large ribosomal subunit protein bL28.